Reading from the N-terminus, the 739-residue chain is Phosphoribosylformylglycinamidine synthase subunit PurL (739 aa).

The active site involves His53. The ATP site is built by Tyr56 and Lys95. Residue Glu97 participates in Mg(2+) binding. Substrate contacts are provided by residues Ser98–His101 and Arg120. His99 acts as the Proton acceptor in catalysis. Residue Asp121 participates in Mg(2+) binding. Position 244 (Gln244) interacts with substrate. Asp274 lines the Mg(2+) pocket. Glu318 to Gln320 is a substrate binding site. ATP-binding residues include Asp501 and Gly538. Asn539 contributes to the Mg(2+) binding site. Ser541 provides a ligand contact to substrate.

It belongs to the FGAMS family. Monomer. Part of the FGAM synthase complex composed of 1 PurL, 1 PurQ and 2 PurS subunits.

It localises to the cytoplasm. It carries out the reaction N(2)-formyl-N(1)-(5-phospho-beta-D-ribosyl)glycinamide + L-glutamine + ATP + H2O = 2-formamido-N(1)-(5-O-phospho-beta-D-ribosyl)acetamidine + L-glutamate + ADP + phosphate + H(+). It participates in purine metabolism; IMP biosynthesis via de novo pathway; 5-amino-1-(5-phospho-D-ribosyl)imidazole from N(2)-formyl-N(1)-(5-phospho-D-ribosyl)glycinamide: step 1/2. Part of the phosphoribosylformylglycinamidine synthase complex involved in the purines biosynthetic pathway. Catalyzes the ATP-dependent conversion of formylglycinamide ribonucleotide (FGAR) and glutamine to yield formylglycinamidine ribonucleotide (FGAM) and glutamate. The FGAM synthase complex is composed of three subunits. PurQ produces an ammonia molecule by converting glutamine to glutamate. PurL transfers the ammonia molecule to FGAR to form FGAM in an ATP-dependent manner. PurS interacts with PurQ and PurL and is thought to assist in the transfer of the ammonia molecule from PurQ to PurL. In Listeria welshimeri serovar 6b (strain ATCC 35897 / DSM 20650 / CCUG 15529 / CIP 8149 / NCTC 11857 / SLCC 5334 / V8), this protein is Phosphoribosylformylglycinamidine synthase subunit PurL.